Reading from the N-terminus, the 958-residue chain is Dermatan-sulfate epimerase (958 aa).

The signal sequence occupies residues 1-22; the sequence is MRTHTRGAPSVFFIYLLCFVSA. Residues 23–902 lie on the Lumenal side of the membrane; sequence YITDENPEVM…APSLSASYTR (880 aa). Residue Asn183 is glycosylated (N-linked (GlcNAc...) (complex) asparagine). His205 acts as the Proton donor in catalysis. Tyr261 is an active-site residue. Asn336 carries an N-linked (GlcNAc...) (high mannose) asparagine glycan. Asn411 carries N-linked (GlcNAc...) (complex) asparagine glycosylation. Residues His452 and Glu470 each coordinate Mn(2+). The active site involves Tyr473. Mn(2+) is bound at residue Asn481. Residue Asn642 is glycosylated (N-linked (GlcNAc...) (complex) asparagine). N-linked (GlcNAc...) (paucimannose) asparagine glycosylation occurs at Asn648. A helical transmembrane segment spans residues 903–923; it reads LFLILNIAIFFVMLAMQLTYF. Over 924-933 the chain is Cytoplasmic; it reads QRAQSLHGQR. The chain crosses the membrane as a helical span at residues 934-954; it reads CLYAVLLIDSCILLWLYSSCS. Topologically, residues 955–958 are lumenal; the sequence is QSQC.

The protein belongs to the dermatan-sulfate isomerase family. Mn(2+) is required as a cofactor. Post-translationally, N-glycosylated. Glycosylation is important for enzymatic activity. Ubiquitously expressed with higher expression in kidney and ovary and lower expression in brain, colon and thymus. Also expressed in renal cell carcinomas, brain tumors, and in a part of melanomas and adenocarcinomas from organs other than the breast. Expressed in squamous cell carcinomas (SCC), glioma, and some adenocarcinoma cell lines, but not in breast cancer cell lines or any normal tissues (at protein level).

The protein localises to the endoplasmic reticulum membrane. The protein resides in the golgi apparatus membrane. Its subcellular location is the cytoplasmic vesicle membrane. It localises to the microsome membrane. The enzyme catalyses chondroitin 4'-sulfate = dermatan 4'-sulfate. It functions in the pathway glycan metabolism; chondroitin sulfate biosynthesis. Its pathway is glycan metabolism; heparan sulfate biosynthesis. Functionally, converts D-glucuronic acid to L-iduronic acid (IdoUA) residues. Plays an important role in the biosynthesis of the glycosaminoglycan/mucopolysaccharide dermatan sulfate. The chain is Dermatan-sulfate epimerase (DSE) from Homo sapiens (Human).